The following is a 649-amino-acid chain: Quinol oxidase subunit 1 (649 aa).

The Extracellular portion of the chain corresponds to 1 to 13 (MKFKWDEFFVTGD). The chain crosses the membrane as a helical span at residues 14 to 34 (PLILGAQVSIALSTIAIIFVL). At 35–55 (TYFKKWKWLWSEWITTVDHKK) the chain is on the cytoplasmic side. The helical transmembrane segment at 56-76 (LGIMYIISAVIMLFRGGVDGL) threads the bilayer. Topologically, residues 77–104 (MMRAQLALPNNSFLDSNHYNEIFTTHGT) are extracellular. A Fe(II)-heme a-binding site is contributed by histidine 102. Residues 105–125 (IMIIFMAMPFLIGLINVVVPL) traverse the membrane as a helical segment. The Cytoplasmic portion of the chain corresponds to 126–139 (QIGARDVAFPYLNN). Residues 140 to 160 (LSFWTFFVGAMLFNISFVIGG) form a helical membrane-spanning segment. Residues 161 to 187 (SPNAGWTSYMPLASNDMSPGPGENYYL) are Extracellular-facing. The helical transmembrane segment at 188–208 (LGLQIAGIGTLMTGINFMVTI) threads the bilayer. The Cytoplasmic segment spans residues 209–228 (LKMRTKGMTLMRMPMFTWTT). A helical membrane pass occupies residues 229–249 (LITMVIIVFAFPVLTVALALL). The Extracellular segment spans residues 250-273 (SFDRLFGAHFFTLEAGGMPMLWAN). Residues 274–294 (LFWIWGHPEVYIVILPAFGIF) traverse the membrane as a helical segment. Cu cation contacts are provided by histidine 280 and tyrosine 284. Positions 280 to 284 (HPEVY) form a cross-link, 1'-histidyl-3'-tyrosine (His-Tyr). The Cytoplasmic segment spans residues 295-305 (SEIISSFARKQ). The chain crosses the membrane as a helical span at residues 306-326 (LFGYTAMVGSIIAISVLSFLV). At 327-342 (WTHHFFTMGNSASVNS) the chain is on the extracellular side. 2 residues coordinate Cu cation: histidine 329 and histidine 330. A helical membrane pass occupies residues 343–363 (FFSITTMAISIPTGVKIFNWL). Residues 364 to 376 (FTMYKGRISFTTP) lie on the Cytoplasmic side of the membrane. A helical membrane pass occupies residues 377–397 (MLWALAFIPNFVIGGVTGVML). Residues 398-415 (AMAAADYQYHNTYFLVSH) are Extracellular-facing. Residue histidine 415 participates in heme a3 binding. Residues 416 to 436 (FHYVLIAGTVFACFAGFIFWY) form a helical membrane-spanning segment. Histidine 417 contacts Fe(II)-heme a. Residues 437–451 (PKMFGHKLNERIGKW) lie on the Cytoplasmic side of the membrane. The chain crosses the membrane as a helical span at residues 452–472 (FFWIFMIGFNICFFPQYFLGL). The Extracellular segment spans residues 473 to 492 (QGMPRRIYTYGPNDGWTTLN). The chain crosses the membrane as a helical span at residues 493–513 (FISTVGAFMMGVGFLILCYNI). Over 514 to 585 (YYSFRYSTRE…KFKKIHMPSN (72 aa)) the chain is Cytoplasmic. Residues 586–603 (SGRPFFMSVAFGIAGFGL) traverse the membrane as a helical segment. The Extracellular segment spans residues 604–606 (VFE). A helical transmembrane segment spans residues 607–624 (WYWMGVVGLIGVLLCMVL). At 625 to 649 (RSFEYDNGYYISVDEIKETERKISE) the chain is on the cytoplasmic side.

This sequence belongs to the heme-copper respiratory oxidase family. Requires Cu cation as cofactor. It depends on ferriheme a as a cofactor. Heme A3. is required as a cofactor.

It is found in the cell membrane. The enzyme catalyses 2 a quinol + O2 = 2 a quinone + 2 H2O. The protein operates within energy metabolism; oxidative phosphorylation. In terms of biological role, catalyzes quinol oxidation with the concomitant reduction of oxygen to water. Major component for energy conversion during vegetative growth. In Bacillus spizizenii (strain ATCC 23059 / NRRL B-14472 / W23) (Bacillus subtilis subsp. spizizenii), this protein is Quinol oxidase subunit 1 (qoxB).